The following is a 287-amino-acid chain: Probable 3-hydroxybutyryl-CoA dehydrogenase (287 aa).

Belongs to the 3-hydroxyacyl-CoA dehydrogenase family.

It catalyses the reaction (3S)-3-hydroxybutanoyl-CoA + NADP(+) = acetoacetyl-CoA + NADPH + H(+). It functions in the pathway lipid metabolism; butanoate metabolism. The polypeptide is Probable 3-hydroxybutyryl-CoA dehydrogenase (mmgB) (Bacillus subtilis (strain 168)).